Consider the following 509-residue polypeptide: 2-isopropylmalate synthase (509 aa).

Positions 5 to 267 constitute a Pyruvate carboxyltransferase domain; the sequence is IQIFDTTLRD…QTALNLEETK (263 aa). Aspartate 14, histidine 202, histidine 204, and asparagine 238 together coordinate Mn(2+). The tract at residues 391-509 is regulatory domain; that stretch reads KLETLQLQYV…AAENVEKVGN (119 aa).

This sequence belongs to the alpha-IPM synthase/homocitrate synthase family. LeuA type 1 subfamily. As to quaternary structure, homodimer. The cofactor is Mn(2+).

Its subcellular location is the cytoplasm. It carries out the reaction 3-methyl-2-oxobutanoate + acetyl-CoA + H2O = (2S)-2-isopropylmalate + CoA + H(+). Its pathway is amino-acid biosynthesis; L-leucine biosynthesis; L-leucine from 3-methyl-2-oxobutanoate: step 1/4. In terms of biological role, catalyzes the condensation of the acetyl group of acetyl-CoA with 3-methyl-2-oxobutanoate (2-ketoisovalerate) to form 3-carboxy-3-hydroxy-4-methylpentanoate (2-isopropylmalate). This is 2-isopropylmalate synthase from Staphylococcus aureus (strain Mu3 / ATCC 700698).